The sequence spans 456 residues: Serine--tRNA ligase (456 aa).

Disordered regions lie at residues 107–130 and 229–253; these read PHSS…GTPP and FLEN…QDDD. Over residues 114-125 the composition is skewed to basic and acidic residues; the sequence is GRSESDNREVRR. Polar residues predominate over residues 239–248; it reads LPSNSNSPQG. 260-262 contacts L-serine; the sequence is TSE. Residue 291–293 coordinates ATP; the sequence is RSE. L-serine is bound at residue Glu314. 378-381 is an ATP binding site; the sequence is EISS. Position 413 (Ser413) interacts with L-serine.

This sequence belongs to the class-II aminoacyl-tRNA synthetase family. Type-1 seryl-tRNA synthetase subfamily. In terms of assembly, homodimer. The tRNA molecule binds across the dimer.

The protein localises to the cytoplasm. It catalyses the reaction tRNA(Ser) + L-serine + ATP = L-seryl-tRNA(Ser) + AMP + diphosphate + H(+). The catalysed reaction is tRNA(Sec) + L-serine + ATP = L-seryl-tRNA(Sec) + AMP + diphosphate + H(+). The protein operates within aminoacyl-tRNA biosynthesis; selenocysteinyl-tRNA(Sec) biosynthesis; L-seryl-tRNA(Sec) from L-serine and tRNA(Sec): step 1/1. Catalyzes the attachment of serine to tRNA(Ser). Is also able to aminoacylate tRNA(Sec) with serine, to form the misacylated tRNA L-seryl-tRNA(Sec), which will be further converted into selenocysteinyl-tRNA(Sec). This chain is Serine--tRNA ligase, found in Nitrosospira multiformis (strain ATCC 25196 / NCIMB 11849 / C 71).